The primary structure comprises 205 residues: Glycerol-3-phosphate acyltransferase 1 (205 aa).

Transmembrane regions (helical) follow at residues 7–27 (TLIGYVFGNFLTAMIVGKLFL), 52–74 (WGILTCLGDLLKSLIALFIVYFV), 78–100 (HINIAYAGLGLILGHCFPIWNHF), 125–145 (LLIALILTAIMQNLTIPPLVF), and 160–180 (AGIVFMVITLIMVYKFWQDII).

This sequence belongs to the PlsY family. As to quaternary structure, probably interacts with PlsX.

The protein resides in the cell membrane. It catalyses the reaction an acyl phosphate + sn-glycerol 3-phosphate = a 1-acyl-sn-glycero-3-phosphate + phosphate. The protein operates within lipid metabolism; phospholipid metabolism. In terms of biological role, catalyzes the transfer of an acyl group from acyl-phosphate (acyl-PO(4)) to glycerol-3-phosphate (G3P) to form lysophosphatidic acid (LPA). This enzyme utilizes acyl-phosphate as fatty acyl donor, but not acyl-CoA or acyl-ACP. This Lactobacillus acidophilus (strain ATCC 700396 / NCK56 / N2 / NCFM) protein is Glycerol-3-phosphate acyltransferase 1.